We begin with the raw amino-acid sequence, 392 residues long: Digeranylgeranylglycerophospholipid reductase (392 aa).

FAD contacts are provided by G15, E34, C45, A46, G48, R99, A123, D279, G291, and I292. V370 contributes to the a 2,3-bis-O-(geranylgeranyl)-sn-glycerol 1-phospholipid binding site.

Belongs to the geranylgeranyl reductase family. DGGGPL reductase subfamily. The cofactor is FAD.

The enzyme catalyses a 2,3-bis-O-phytanyl-sn-glycerol 1-phospholipid + 8 oxidized 2[4Fe-4S]-[ferredoxin] = a 2,3-bis-O-(geranylgeranyl)-sn-glycerol 1-phospholipid + 8 reduced 2[4Fe-4S]-[ferredoxin] + 16 H(+). It carries out the reaction 2,3-bis-O-(phytanyl)-sn-glycerol 1-phosphate + 8 oxidized 2[4Fe-4S]-[ferredoxin] = 2,3-bis-O-(geranylgeranyl)-sn-glycerol 1-phosphate + 8 reduced 2[4Fe-4S]-[ferredoxin] + 16 H(+). It catalyses the reaction a 2,3-bis-O-phytanyl-sn-glycerol 1-phospholipid + 8 A = a 2,3-bis-O-(geranylgeranyl)-sn-glycerol 1-phospholipid + 8 AH2. The catalysed reaction is CDP-2,3-bis-O-(geranylgeranyl)-sn-glycerol + 8 AH2 = CDP-2,3-bis-O-(phytanyl)-sn-glycerol + 8 A. The enzyme catalyses archaetidylserine + 8 AH2 = 2,3-bis-O-phytanyl-sn-glycero-3-phospho-L-serine + 8 A. It participates in membrane lipid metabolism; glycerophospholipid metabolism. Functionally, is involved in the reduction of 2,3-digeranylgeranylglycerophospholipids (unsaturated archaeols) into 2,3-diphytanylglycerophospholipids (saturated archaeols) in the biosynthesis of archaeal membrane lipids. Catalyzes the formation of archaetidic acid (2,3-di-O-phytanyl-sn-glyceryl phosphate) from 2,3-di-O-geranylgeranylglyceryl phosphate (DGGGP) via the hydrogenation of each double bond of the isoprenoid chains. Is also probably able to reduce double bonds of geranyl groups in CDP-2,3-bis-O-(geranylgeranyl)-sn-glycerol and archaetidylserine, thus acting at various stages in the biosynthesis of archaeal membrane lipids. The protein is Digeranylgeranylglycerophospholipid reductase of Methanocella arvoryzae (strain DSM 22066 / NBRC 105507 / MRE50).